The primary structure comprises 361 residues: Hsc70-interacting protein (361 aa).

Residues 39 to 98 are disordered; the sequence is GGTIPPAPASTSTDETSKGKAEEQPEEPVKSPEPESEESDLEIDNEGVIEPDNDDPQEMG. A compositionally biased stretch (basic and acidic residues) spans 53–71; sequence ETSKGKAEEQPEEPVKSPE. A compositionally biased stretch (acidic residues) spans 72-98; that stretch reads PESEESDLEIDNEGVIEPDNDDPQEMG. 3 TPR repeats span residues 112–145, 147–179, and 181–213; these read ANEK…NPCL, ILYA…NPDS, and QTYK…DYDE. Positions 254–270 are enriched in basic and acidic residues; the sequence is KAREEHERAQREEEARR. Residues 254–292 are disordered; that stretch reads KAREEHERAQREEEARRQAGGAQFGGFPGGFPGGFPGAM. Over residues 275 to 292 the composition is skewed to gly residues; the sequence is AQFGGFPGGFPGGFPGAM. Residues 311–350 form the STI1 domain; sequence DPEVLAAMQDPEVMAAFQDVAQNPANMSKYQNNPKVMSLI.

It belongs to the FAM10 family. Homotetramer. Interacts with HSC70 as well as DNAJ homologs and HSP90.

Its subcellular location is the cytoplasm. Functionally, one HIP oligomer binds the ATPase domains of at least two HSC70 molecules dependent on activation of the HSC70 ATPase by HSP40. Stabilizes the ADP state of HSC70 that has a high affinity for substrate protein. Through its own chaperone activity, it may contribute to the interaction of HSC70 with various target proteins. The chain is Hsc70-interacting protein (ST13) from Gallus gallus (Chicken).